The primary structure comprises 228 residues: Cytidylate kinase (228 aa).

An ATP-binding site is contributed by 17–25 (GPTASGKGT).

This sequence belongs to the cytidylate kinase family. Type 1 subfamily.

Its subcellular location is the cytoplasm. It carries out the reaction CMP + ATP = CDP + ADP. The enzyme catalyses dCMP + ATP = dCDP + ADP. The chain is Cytidylate kinase from Burkholderia vietnamiensis (strain G4 / LMG 22486) (Burkholderia cepacia (strain R1808)).